Here is an 800-residue protein sequence, read N- to C-terminus: Nucleolar complex protein 3 homolog (800 aa).

A disordered region spans residues 37–90 (STIKKYRKEQRKLRQAVKDAVSKKPFPLEDPKSKRPVKGMEREEEDEEDQALPL). The segment covering 40–51 (KKYRKEQRKLRQ) has biased composition (basic residues). A compositionally biased stretch (basic and acidic residues) spans 52-77 (AVKDAVSKKPFPLEDPKSKRPVKGME). The span at 78 to 90 (REEEDEEDQALPL) shows a compositional bias: acidic residues. A Glycyl lysine isopeptide (Lys-Gly) (interchain with G-Cter in SUMO2) cross-link involves residue Lys-333. Residues 450 to 489 (FKEKRKTLSRMQRKWKKAEEKLERELREAEASESTERKLK) adopt a coiled-coil conformation.

Belongs to the CBF/MAK21 family.

The protein resides in the nucleus. It localises to the nucleolus. The protein is Nucleolar complex protein 3 homolog (NOC3L) of Cricetulus griseus (Chinese hamster).